The primary structure comprises 74 residues: Small ribosomal subunit protein uS8c (74 aa).

Belongs to the universal ribosomal protein uS8 family. Part of the 30S ribosomal subunit.

The protein localises to the plastid. It is found in the chloroplast. Functionally, one of the primary rRNA binding proteins, it binds directly to 16S rRNA central domain where it helps coordinate assembly of the platform of the 30S subunit. This is Small ribosomal subunit protein uS8c (rps8) from Oenothera ammophila (Evening primerose).